The primary structure comprises 142 residues: ECLVTEGLKVKLQWASAFGHAHQRVAFGLELWKGILREHPEIKAPFSRVRGDNIYSPQFGAHSQRVLSGLDITISMLDTPDMLAAQLAHLKVQHVERNLKPEFFDIFLKHLLHVLGDRLGTHFDFGAWHDCVDQIIDGIKDI.

Positions 1–142 constitute a Globin domain; sequence ECLVTEGLKV…DQIIDGIKDI (142 aa). The cysteines at positions 2 and 131 are disulfide-linked. Position 94 (H94) interacts with heme b.

The protein belongs to the globin family. In terms of assembly, the extracellular hemoglobin of the earthworm consists of 12 subunits that have a hexagonal bilayer structure with a molecular weight near 3.8 million. Each one-twelfth subunit is composed primarily of disulfide linked trimers (chains A, B, and C) and monomers (chain D).

The chain is Extracellular globin-1 from Lumbricus terrestris (Common earthworm).